The sequence spans 424 residues: UDP-N-acetylglucosamine 1-carboxyvinyltransferase (424 aa).

Position 22-23 (22-23 (KN)) interacts with phosphoenolpyruvate. Arg-93 is a UDP-N-acetyl-alpha-D-glucosamine binding site. The active-site Proton donor is the Cys-117. Residue Cys-117 is modified to 2-(S-cysteinyl)pyruvic acid O-phosphothioketal. UDP-N-acetyl-alpha-D-glucosamine is bound by residues 122-126 (RPIDL), Asp-307, and Ile-329.

Belongs to the EPSP synthase family. MurA subfamily.

It localises to the cytoplasm. It carries out the reaction phosphoenolpyruvate + UDP-N-acetyl-alpha-D-glucosamine = UDP-N-acetyl-3-O-(1-carboxyvinyl)-alpha-D-glucosamine + phosphate. It participates in cell wall biogenesis; peptidoglycan biosynthesis. Functionally, cell wall formation. Adds enolpyruvyl to UDP-N-acetylglucosamine. This is UDP-N-acetylglucosamine 1-carboxyvinyltransferase from Chlorobium phaeovibrioides (strain DSM 265 / 1930) (Prosthecochloris vibrioformis (strain DSM 265)).